A 413-amino-acid chain; its full sequence is Multifunctional CCA protein (413 aa).

2 residues coordinate ATP: glycine 8 and arginine 11. CTP contacts are provided by glycine 8 and arginine 11. Residues aspartate 21 and aspartate 23 each contribute to the Mg(2+) site. 3 residues coordinate ATP: arginine 91, arginine 137, and arginine 140. CTP contacts are provided by arginine 91, arginine 137, and arginine 140. One can recognise an HD domain in the interval 228 to 329 (TGIHTLMTLS…VKLFDSIDAW (102 aa)).

This sequence belongs to the tRNA nucleotidyltransferase/poly(A) polymerase family. Bacterial CCA-adding enzyme type 1 subfamily. As to quaternary structure, monomer. Can also form homodimers and oligomers. Mg(2+) is required as a cofactor. It depends on Ni(2+) as a cofactor.

It carries out the reaction a tRNA precursor + 2 CTP + ATP = a tRNA with a 3' CCA end + 3 diphosphate. It catalyses the reaction a tRNA with a 3' CCA end + 2 CTP + ATP = a tRNA with a 3' CCACCA end + 3 diphosphate. In terms of biological role, catalyzes the addition and repair of the essential 3'-terminal CCA sequence in tRNAs without using a nucleic acid template. Adds these three nucleotides in the order of C, C, and A to the tRNA nucleotide-73, using CTP and ATP as substrates and producing inorganic pyrophosphate. tRNA 3'-terminal CCA addition is required both for tRNA processing and repair. Also involved in tRNA surveillance by mediating tandem CCA addition to generate a CCACCA at the 3' terminus of unstable tRNAs. While stable tRNAs receive only 3'-terminal CCA, unstable tRNAs are marked with CCACCA and rapidly degraded. The sequence is that of Multifunctional CCA protein from Citrobacter koseri (strain ATCC BAA-895 / CDC 4225-83 / SGSC4696).